The chain runs to 364 residues: Fructose-bisphosphate aldolase B (364 aa).

N-acetylalanine is present on A2. Position 13 is an N6-succinyllysine (K13). S36 is subject to Phosphoserine. T39 carries the post-translational modification Phosphothreonine. R43 contacts beta-D-fructose 1,6-bisphosphate. S89 carries the post-translational modification Phosphoserine. At T119 the chain carries Phosphothreonine. K121 carries the post-translational modification N6-succinyllysine. Position 132 is a phosphoserine (S132). The active-site Proton acceptor is the E188. K230 acts as the Schiff-base intermediate with dihydroxyacetone-P in catalysis. Phosphoserine is present on residues S272, S276, S299, and S301. 272-274 is a binding site for beta-D-fructose 1,6-bisphosphate; that stretch reads SGG. Residue R304 coordinates beta-D-fructose 1,6-bisphosphate. S309 is modified (phosphoserine). K317 is modified (N6-succinyllysine).

It belongs to the class I fructose-bisphosphate aldolase family. In terms of assembly, homotetramer. Interacts with BBS1, BBS2, BBS4 and BBS7. Forms a ternary complex with G6PD and TP53; this interaction is direct.

Its subcellular location is the cytoplasm. The protein resides in the cytosol. The protein localises to the cytoskeleton. It is found in the microtubule organizing center. It localises to the centrosome. Its subcellular location is the centriolar satellite. It catalyses the reaction beta-D-fructose 1,6-bisphosphate = D-glyceraldehyde 3-phosphate + dihydroxyacetone phosphate. The enzyme catalyses beta-D-fructose 1-phosphate = D-glyceraldehyde + dihydroxyacetone phosphate. It participates in carbohydrate degradation; glycolysis; D-glyceraldehyde 3-phosphate and glycerone phosphate from D-glucose: step 4/4. The protein operates within carbohydrate biosynthesis; gluconeogenesis. It functions in the pathway carbohydrate metabolism; fructose metabolism. Functionally, catalyzes the aldol cleavage of fructose 1,6-biphosphate to form two triosephosphates dihydroxyacetone phosphate and D-glyceraldehyde 3-phosphate in glycolysis as well as the reverse stereospecific aldol addition reaction in gluconeogenesis. In fructolysis, metabolizes fructose 1-phosphate derived from the phosphorylation of dietary fructose by fructokinase into dihydroxyacetone phosphate and D-glyceraldehyde. Acts as an adapter independently of its enzymatic activity, exerts a tumor suppressor role by stabilizing the ternary complex with G6PD and TP53 to inhibit G6PD activity and keep oxidative pentose phosphate metabolism in check. In Oryctolagus cuniculus (Rabbit), this protein is Fructose-bisphosphate aldolase B (ALDOB).